Here is a 97-residue protein sequence, read N- to C-terminus: Co-chaperonin GroES (97 aa).

It belongs to the GroES chaperonin family. Heptamer of 7 subunits arranged in a ring. Interacts with the chaperonin GroEL.

The protein localises to the cytoplasm. In terms of biological role, together with the chaperonin GroEL, plays an essential role in assisting protein folding. The GroEL-GroES system forms a nano-cage that allows encapsulation of the non-native substrate proteins and provides a physical environment optimized to promote and accelerate protein folding. GroES binds to the apical surface of the GroEL ring, thereby capping the opening of the GroEL channel. The protein is Co-chaperonin GroES of Gemmatimonas aurantiaca (strain DSM 14586 / JCM 11422 / NBRC 100505 / T-27).